Here is a 267-residue protein sequence, read N- to C-terminus: Formamidopyrimidine-DNA glycosylase (267 aa).

Catalysis depends on proline 2, which acts as the Schiff-base intermediate with DNA. Glutamate 3 functions as the Proton donor in the catalytic mechanism. The Proton donor; for beta-elimination activity role is filled by lysine 53. Positions 82 and 100 each coordinate DNA. The FPG-type zinc-finger motif lies at 230–264; sequence AVYGREGLPCPACGRPVERRVVAGRGTHFCPTCQG. The active-site Proton donor; for delta-elimination activity is arginine 254.

It belongs to the FPG family. In terms of assembly, monomer. It depends on Zn(2+) as a cofactor.

It catalyses the reaction Hydrolysis of DNA containing ring-opened 7-methylguanine residues, releasing 2,6-diamino-4-hydroxy-5-(N-methyl)formamidopyrimidine.. The catalysed reaction is 2'-deoxyribonucleotide-(2'-deoxyribose 5'-phosphate)-2'-deoxyribonucleotide-DNA = a 3'-end 2'-deoxyribonucleotide-(2,3-dehydro-2,3-deoxyribose 5'-phosphate)-DNA + a 5'-end 5'-phospho-2'-deoxyribonucleoside-DNA + H(+). Functionally, involved in base excision repair of DNA damaged by oxidation or by mutagenic agents. Acts as a DNA glycosylase that recognizes and removes damaged bases. Has a preference for oxidized purines, such as 7,8-dihydro-8-oxoguanine (8-oxoG). Has AP (apurinic/apyrimidinic) lyase activity and introduces nicks in the DNA strand. Cleaves the DNA backbone by beta-delta elimination to generate a single-strand break at the site of the removed base with both 3'- and 5'-phosphates. The chain is Formamidopyrimidine-DNA glycosylase from Thermus thermophilus (strain ATCC BAA-163 / DSM 7039 / HB27).